Here is a 650-residue protein sequence, read N- to C-terminus: L-aspartate N-monooxygenase (nitrosuccinate-forming) (650 aa).

This sequence belongs to the nitrosuccinic acid synthase family. The cofactor is FAD.

It carries out the reaction L-aspartate + 3 NADPH + 3 O2 + 2 H(+) = 2-nitrobutanedioate + 3 NADP(+) + 4 H2O. Involved in the biosynthesis of desferrioxamine derivatives which have iron-binding properties and may act as siderophores. Catalyzes the iterative oxidation of L-aspartic acid to nitrosuccinic acid (2-nitrobutanedioate) via N-hydroxyaspartic acid and nitrososuccinic acid. This chain is L-aspartate N-monooxygenase (nitrosuccinate-forming), found in Streptomyces davaonensis (strain DSM 101723 / JCM 4913 / KCC S-0913 / 768).